The primary structure comprises 257 residues: Glutamate racemase (257 aa).

Residues 12-13 (DS) and 44-45 (YG) each bind substrate. C75 (proton donor/acceptor) is an active-site residue. 76–77 (NT) is a substrate binding site. C185 (proton donor/acceptor) is an active-site residue. 186–187 (TH) contributes to the substrate binding site.

This sequence belongs to the aspartate/glutamate racemases family.

The catalysed reaction is L-glutamate = D-glutamate. Its pathway is cell wall biogenesis; peptidoglycan biosynthesis. Provides the (R)-glutamate required for cell wall biosynthesis. The protein is Glutamate racemase of Clostridium botulinum (strain Langeland / NCTC 10281 / Type F).